A 370-amino-acid chain; its full sequence is Coiled-coil domain-containing protein 89 (370 aa).

Residues 1 to 21 (MPQEEKTLRMDTPPPDEILGK) form a disordered region. T12 bears the Phosphothreonine mark. Residues 36 to 346 (KEMDGLREAL…YDELRLQSEA (311 aa)) are a coiled coil.

It belongs to the CCDC89 family. As to quaternary structure, interacts with HEY1. Expression is restricted to the adult testis, where localization is almost exclusive to round spermatids.

It is found in the cytoplasm. Its subcellular location is the nucleus. In Mus musculus (Mouse), this protein is Coiled-coil domain-containing protein 89.